An 806-amino-acid chain; its full sequence is Integrin beta-7 (806 aa).

The first 19 residues, 1 to 19 (MVDSSTVLIFLLVLGGGQS), serve as a signal peptide directing secretion. At 20–724 (ELDTKITSSG…PQEKGVDHTR (705 aa)) the chain is on the extracellular side. Residues 44-92 (SCQPVPSCQKCILSHPSCAWCKQLNFTASGEAEARRCARREELLARGCP) enclose the PSI domain. 26 disulfide bridges follow: cysteine 51–cysteine 476, cysteine 54–cysteine 80, cysteine 64–cysteine 91, cysteine 216–cysteine 223, cysteine 271–cysteine 311, cysteine 412–cysteine 428, cysteine 448–cysteine 474, cysteine 478–cysteine 497, cysteine 488–cysteine 500, cysteine 502–cysteine 511, cysteine 513–cysteine 545, cysteine 527–cysteine 543, cysteine 537–cysteine 548, cysteine 550–cysteine 559, cysteine 561–cysteine 582, cysteine 566–cysteine 580, cysteine 574–cysteine 585, cysteine 587–cysteine 596, cysteine 598–cysteine 621, cysteine 605–cysteine 619, cysteine 613–cysteine 624, cysteine 626–cysteine 635, cysteine 638–cysteine 641, cysteine 645–cysteine 688, cysteine 651–cysteine 670, and cysteine 654–cysteine 666. Asparagine 68 is a glycosylation site (N-linked (GlcNAc...) asparagine). Over residues 98 to 107 (EPRGRQEVLQ) the composition is skewed to basic and acidic residues. The tract at residues 98–123 (EPRGRQEVLQDKPLSQGDRGEGATQL) is disordered. The region spanning 150–389 (YPVDLYYLMD…QLIMDAYDSL (240 aa)) is the VWFA domain. Residues serine 161 and serine 163 each coordinate Mg(2+). Ca(2+) is bound by residues serine 163, aspartate 166, aspartate 167, and aspartate 198. N-linked (GlcNAc...) asparagine glycosylation occurs at asparagine 250. 4 residues coordinate Ca(2+): asparagine 254, aspartate 256, proline 258, and glutamate 259. Glutamate 259 provides a ligand contact to Mg(2+). An N-linked (GlcNAc...) asparagine glycan is attached at asparagine 279. Ca(2+) contacts are provided by aspartate 289 and glutamate 373. An N-linked (GlcNAc...) asparagine glycan is attached at asparagine 434. I-EGF domains follow at residues 478–512 (CGDA…QLCE), 513–560 (CSEA…RLCE), 561–597 (CDDA…RACE), and 598–636 (CSKS…ALCD). N-linked (GlcNAc...) asparagine glycosylation occurs at asparagine 531. Asparagine 590 carries N-linked (GlcNAc...) asparagine glycosylation. Residues asparagine 665 and asparagine 674 are each glycosylated (N-linked (GlcNAc...) asparagine). The helical transmembrane segment at 725–745 (AIILGCTGGIVAVGLGLVLAY) threads the bilayer. Over 746–806 (RLSVEIYDRR…PSLSLTREAD (61 aa)) the chain is Cytoplasmic. A disordered region spans residues 786-806 (NPRFQGTNGRSPSLSLTREAD).

This sequence belongs to the integrin beta chain family. As to quaternary structure, heterodimer of an alpha and a beta subunit. ITGB7/beta-7 associates with either ITGA4/alpha-4 or ITGAE/alpha-E. Integrin ITGA4/ITGB7 interacts with MADCAM1. Integrin ITGA4/ITGB7 interacts with VCAM1 and fibronectin. Interacts with FLNA (via filamin repeats 4, 9, 12, 17, 19, 21, and 23).

The protein localises to the cell membrane. Its function is as follows. Integrin ITGA4/ITGB7 (alpha-4/beta-7) (Peyer patches-specific homing receptor LPAM-1) is an adhesion molecule that mediates lymphocyte migration and homing to gut-associated lymphoid tissue (GALT). Integrin ITGA4/ITGB7 interacts with the cell surface adhesion molecules MADCAM1 which is normally expressed by the vascular endothelium of the gastrointestinal tract. Also interacts with VCAM1 and fibronectin, an extracellular matrix component. It recognizes one or more domains within the alternatively spliced CS-1 region of fibronectin. Interactions involve the tripeptide L-D-T in MADCAM1, and L-D-V in fibronectin. Integrin ITGAE/ITGB7 (alpha-E/beta-7, HML-1) is a receptor for E-cadherin. The chain is Integrin beta-7 (Itgb7) from Mus musculus (Mouse).